Reading from the N-terminus, the 1024-residue chain is Myosin phosphatase Rho-interacting protein (1024 aa).

Residues 1-382 (MSAAKENPCR…DRRSTESSMT (382 aa)) form an interaction with F-actin region. A PH 1 domain is found at 43–150 (KPIYGGWLLL…WLEMLMVYPR (108 aa)). Residues 152-262 (NKQNQKKKRK…GDRVDGGRKV (111 aa)) are disordered. The span at 179–190 (SSSGGSSGSSSS) shows a compositional bias: low complexity. S193, S219, S221, S225, and S227 each carry phosphoserine. Residues 221-233 (SPAQSPSQSQPPA) show a composition bias toward low complexity. Basic and acidic residues predominate over residues 240-262 (PGLESKEDESTISGDRVDGGRKV). S266, S270, S289, and S292 each carry phosphoserine. Disordered regions lie at residues 274–301 (AKQD…SRRS) and 328–379 (PSSD…STES). Phosphothreonine is present on T295. Residues 333-349 (RQGRSERRAIPRKRDFA) show a composition bias toward basic and acidic residues. S364 bears the Phosphoserine mark. A PH 2 domain is found at 386-482 (LNFKKGWLTK…WIQTIMKHVL (97 aa)). The tract at residues 486-583 (APDVTSSLPE…AEPGELERER (98 aa)) is disordered. Over residues 488 to 508 (DVTSSLPEGKNKSTSFETCSR) the composition is skewed to polar residues. S492 carries the post-translational modification Phosphoserine. Residues 522–545 (PEQKKSRARERRREGRSKTFDWAE) are compositionally biased toward basic and acidic residues. The interval 545-823 (EFRPIQQALA…SVQRELEVLS (279 aa)) is interaction with RHOA. Residue S617 is modified to Phosphoserine. T645 is modified (phosphothreonine). Positions 672–976 (HELTSLLEKE…AATEALGEKS (305 aa)) form a coiled coil. S799 is subject to Phosphoserine. The tract at residues 823-878 (SEQYSQKCLENAHLAQALEAERQALRQCQRENQELNAHNQELNNRLAAEITRLRTL) is interaction with PPP1R12A. The interval 972 to 995 (LGEKSPEGTTVSGYDIMKSKSNPD) is disordered. A phosphoserine mark is found at S976, G979, S992, S1013, and S1015.

As to quaternary structure, binds RHOA, PPP1R12A/MBS and PPP1R12C/MBS85 through adjacent coiled coil domains. Interacts with MYZAP. Binds F-actin through its N-terminus. In terms of tissue distribution, expressed in Kidney, Brain, Heart and Lung.

The protein localises to the cytoplasm. Its subcellular location is the cytoskeleton. Its function is as follows. Targets myosin phosphatase to the actin cytoskeleton. Required for the regulation of the actin cytoskeleton by RhoA and ROCK1. Depletion leads to an increased number of stress fibers in smooth muscle cells through stabilization of actin fibers by phosphorylated myosin. Overexpression of MRIP as well as its F-actin-binding region leads to disassembly of stress fibers in neuronal cells. This chain is Myosin phosphatase Rho-interacting protein (Mprip), found in Mus musculus (Mouse).